The following is a 335-amino-acid chain: Pyridoxal 5'-phosphate synthase subunit PdxS (335 aa).

A D-ribose 5-phosphate-binding site is contributed by Asp-59. The Schiff-base intermediate with D-ribose 5-phosphate role is filled by Lys-116. Gly-188 contacts D-ribose 5-phosphate. D-glyceraldehyde 3-phosphate is bound at residue Lys-200. D-ribose 5-phosphate contacts are provided by residues Gly-253 and 274–275 (GS).

It belongs to the PdxS/SNZ family. In the presence of PdxT, forms a dodecamer of heterodimers.

The enzyme catalyses aldehydo-D-ribose 5-phosphate + D-glyceraldehyde 3-phosphate + L-glutamine = pyridoxal 5'-phosphate + L-glutamate + phosphate + 3 H2O + H(+). It functions in the pathway cofactor biosynthesis; pyridoxal 5'-phosphate biosynthesis. In terms of biological role, catalyzes the formation of pyridoxal 5'-phosphate from ribose 5-phosphate (RBP), glyceraldehyde 3-phosphate (G3P) and ammonia. The ammonia is provided by the PdxT subunit. Can also use ribulose 5-phosphate and dihydroxyacetone phosphate as substrates, resulting from enzyme-catalyzed isomerization of RBP and G3P, respectively. This Desulfurococcus amylolyticus (strain DSM 18924 / JCM 16383 / VKM B-2413 / 1221n) (Desulfurococcus kamchatkensis) protein is Pyridoxal 5'-phosphate synthase subunit PdxS.